The chain runs to 368 residues: Probable pectate lyase 4 (368 aa).

Positions 1-25 (MASLVVIVSLLLAAFASPLLETAHS) are cleaved as a signal peptide. N27 carries N-linked (GlcNAc...) asparagine glycosylation. Residues D167, D191, and D195 each coordinate Ca(2+). The active site involves R247.

Belongs to the polysaccharide lyase 1 family. Requires Ca(2+) as cofactor.

The enzyme catalyses Eliminative cleavage of (1-&gt;4)-alpha-D-galacturonan to give oligosaccharides with 4-deoxy-alpha-D-galact-4-enuronosyl groups at their non-reducing ends.. It functions in the pathway glycan metabolism; pectin degradation; 2-dehydro-3-deoxy-D-gluconate from pectin: step 2/5. In Arabidopsis thaliana (Mouse-ear cress), this protein is Probable pectate lyase 4.